A 473-amino-acid chain; its full sequence is Serine palmitoyltransferase 1 (473 aa).

The Lumenal segment spans residues 1 to 15 (MATVAEQWVLVEMVQ). The interaction with SPTLC2 stretch occupies residues 1 to 66 (MATVAEQWVL…KEELIEEWQP (66 aa)). The helical transmembrane segment at 16-36 (ALYEAPAYHLILEGILILWII) threads the bilayer. The Cytoplasmic portion of the chain corresponds to 37 to 473 (RLLFSKTYKL…ISEVAQTVLL (437 aa)). Tyr164 is subject to Phosphotyrosine; by ABL.

The protein belongs to the class-II pyridoxal-phosphate-dependent aminotransferase family. Component of the serine palmitoyltransferase (SPT) complex, which is also composed of SPTLC2 or SPTLC3 and SPTSSA or SPTSSB. The heterodimer with SPTLC2 or SPTLC3 forms the catalytic core of the enzyme, while SPTSSA or SPTSSB subunits determine substrate specificity. SPT also interacts with ORMDL proteins, especially ORMDL3, which negatively regulate SPT activity in the presence of ceramides. Forms dimers of heterodimers with SPTLC2. Interacts with RTN4. Pyridoxal 5'-phosphate serves as cofactor. Post-translationally, phosphorylation at Tyr-164 inhibits activity and promotes cell survival.

The protein resides in the endoplasmic reticulum membrane. The catalysed reaction is L-serine + hexadecanoyl-CoA + H(+) = 3-oxosphinganine + CO2 + CoA. It catalyses the reaction octadecanoyl-CoA + L-serine + H(+) = 3-oxoeicosasphinganine + CO2 + CoA. It carries out the reaction tetradecanoyl-CoA + L-serine + H(+) = 3-oxohexadecasphinganine + CO2 + CoA. The enzyme catalyses dodecanoyl-CoA + L-serine + H(+) = 3-oxotetradecasphinganine + CO2 + CoA. Its pathway is lipid metabolism; sphingolipid metabolism. With respect to regulation, SPT complex catalytic activity is negatively regulated by ORMDL proteins, including ORMDL3, in the presence of ceramides. This mechanism allows to maintain ceramide levels at sufficient concentrations for the production of complex sphingolipids, but which prevents the accumulation of ceramides to levels that trigger apoptosis. Component of the serine palmitoyltransferase multisubunit enzyme (SPT) that catalyzes the initial and rate-limiting step in sphingolipid biosynthesis by condensing L-serine and activated acyl-CoA (most commonly palmitoyl-CoA) to form long-chain bases. The SPT complex is also composed of SPTLC2 or SPTLC3 and SPTSSA or SPTSSB. Within this complex, the heterodimer with SPTLC2 or SPTLC3 forms the catalytic core. The composition of the serine palmitoyltransferase (SPT) complex determines the substrate preference. The SPTLC1-SPTLC2-SPTSSA complex shows a strong preference for C16-CoA substrate, while the SPTLC1-SPTLC3-SPTSSA isozyme uses both C14-CoA and C16-CoA as substrates, with a slight preference for C14-CoA. The SPTLC1-SPTLC2-SPTSSB complex shows a strong preference for C18-CoA substrate, while the SPTLC1-SPTLC3-SPTSSB isozyme displays an ability to use a broader range of acyl-CoAs, without apparent preference. Required for adipocyte cell viability and metabolic homeostasis. This Bos taurus (Bovine) protein is Serine palmitoyltransferase 1 (SPTLC1).